The chain runs to 473 residues: Glutamyl-tRNA reductase (473 aa).

Residues T49 to R52, S109, E114 to Q116, and Q120 each bind substrate. C50 serves as the catalytic Nucleophile. A disordered region spans residues L196 to P215. G226 to G231 is an NADP(+) binding site.

The protein belongs to the glutamyl-tRNA reductase family. Homodimer.

The enzyme catalyses (S)-4-amino-5-oxopentanoate + tRNA(Glu) + NADP(+) = L-glutamyl-tRNA(Glu) + NADPH + H(+). It functions in the pathway porphyrin-containing compound metabolism; protoporphyrin-IX biosynthesis; 5-aminolevulinate from L-glutamyl-tRNA(Glu): step 1/2. Catalyzes the NADPH-dependent reduction of glutamyl-tRNA(Glu) to glutamate 1-semialdehyde (GSA). The polypeptide is Glutamyl-tRNA reductase (Frankia casuarinae (strain DSM 45818 / CECT 9043 / HFP020203 / CcI3)).